Consider the following 495-residue polypeptide: MPSSTSPDEEDGLETCVLKVFDLDLKESNLVNPSNSLKAELDGSTKKKYSFAKKKAFALLVKTKQVPAPSYEFKGKRWRCCQQLFADQISIHRHVATQHAEDVYQQTASLLKQLTAALSASQSLTPTDKRSSPKDCLTPSQEVSAWLPDVSHVSPQELRSGQGDEEGEVLLYYCYCDLEDPHWVCAWQTALCHHLHLTGKIRIATEGINGTVGGSKVATRLYVEVMLSCPLFKDYLSEDDFKSSKGGSHCFPELRVGVFEEIVPMGISPSQVSYKKPGIHLSPGEFHKEIEKLLSQSSEEQGNTIILDCRNFYESKIGRFQGCLAPDIRKFSYFPSYVDKNLDIFRQKRVLMYCTGGIRCERGSAYLRAKGVCKEVFQLKGGIHKYLEEFPDGFYKGKLFVFDERFALAYNSSVVSECSYCGAPWDQYKLCSTPQCRQLVLTCSACQGQGFTACCVTCQDKGGKQASGPSQDSFKEECECTARRPRIPQEQQAQS.

Phosphoserine is present on serine 268. The Rhodanese domain maps to 300–395 (EQGNTIILDC…YLEEFPDGFY (96 aa)). Residue cysteine 354 is the Cysteine persulfide intermediate of the active site.

The protein is Thiosulfate sulfurtransferase/rhodanese-like domain-containing protein 2 (Tstd2) of Mus musculus (Mouse).